The sequence spans 278 residues: HTH-type transcriptional activator RhaS (278 aa).

The HTH araC/xylS-type domain occupies 174 to 272 (NLLLAWLEDH…NWSPRDIRQG (99 aa)). DNA-binding regions (H-T-H motif) lie at residues 191-212 (DAVADQFSLSLRTLHRQLKQQT) and 239-262 (VTDIAYHCGFSDSNHFSTLFRREF).

In terms of assembly, binds DNA as a dimer.

It is found in the cytoplasm. Functionally, activates expression of the rhaBAD and rhaT operons. The chain is HTH-type transcriptional activator RhaS from Escherichia coli O157:H7.